We begin with the raw amino-acid sequence, 443 residues long: Phenylalanine--tRNA ligase alpha subunit (443 aa).

L-phenylalanine is bound by residues threonine 332, 375–377 (QVE), and tyrosine 415. Glutamate 417 is a Mg(2+) binding site. Residue phenylalanine 441 participates in L-phenylalanine binding.

This sequence belongs to the class-II aminoacyl-tRNA synthetase family. Phe-tRNA synthetase alpha subunit type 2 subfamily. Heterotetramer; dimer of two heterodimers formed by FARSA and FARSB. It depends on Mg(2+) as a cofactor.

Its subcellular location is the cytoplasm. It carries out the reaction tRNA(Phe) + L-phenylalanine + ATP = L-phenylalanyl-tRNA(Phe) + AMP + diphosphate + H(+). The sequence is that of Phenylalanine--tRNA ligase alpha subunit (FARSA) from Gallus gallus (Chicken).